The following is a 309-amino-acid chain: Histidine protein methyltransferase 1 homolog (309 aa).

Disordered stretches follow at residues 1–37 (MSFK…FDSS) and 79–111 (KPFK…NNKD). Residues 25–37 (EESKLDISEFDSS) are compositionally biased toward basic and acidic residues. Residues 84-109 (NQDNNNDNNVNSNDKNDNNNNNNNNN) are compositionally biased toward low complexity. Residues 132-136 (LWECS), Gly159, 179-181 (QDY), 209-211 (GDW), and Ser229 contribute to the S-adenosyl-L-methionine site.

The protein belongs to the methyltransferase superfamily. METTL18 family.

The protein localises to the cytoplasm. It localises to the cytosol. The protein resides in the nucleus. Its subcellular location is the nucleolus. The catalysed reaction is L-histidyl-[protein] + S-adenosyl-L-methionine = N(tele)-methyl-L-histidyl-[protein] + S-adenosyl-L-homocysteine + H(+). Its function is as follows. Protein-L-histidine N-tele-methyltransferase that probably monomethylates RPL3. Through the methylation of RPL3 may regulate the dynamics of pre-rRNA processing, ribosome biogenesis, and translation. In Dictyostelium discoideum (Social amoeba), this protein is Histidine protein methyltransferase 1 homolog.